We begin with the raw amino-acid sequence, 735 residues long: Alpha-adducin (735 aa).

Met-1 is modified (N-acetylmethionine). Over residues 1 to 11 (MNGDTRAAVVT) the composition is skewed to low complexity. The disordered stretch occupies residues 1–21 (MNGDTRAAVVTSPPPTTAPHK). 3 positions are modified to phosphoserine: Ser-12, Ser-59, and Ser-64. Thr-331 is modified (phosphothreonine). Phosphoserine occurs at positions 334, 353, and 355. Phosphothreonine is present on Thr-358. 4 positions are modified to phosphoserine: Ser-364, Ser-366, Ser-408, and Ser-427. 2 disordered regions span residues 418-487 (GHSF…AVPN) and 576-735 (RREV…KSDS). Thr-429 carries the post-translational modification Phosphothreonine. Phosphoserine is present on residues Ser-431 and Ser-436. The segment covering 440–455 (QQREKTRWLHSGRGDD) has biased composition (basic and acidic residues). Position 445 is a phosphothreonine; by ROCK2 (Thr-445). A phosphoserine mark is found at Ser-464 and Ser-465. A Phosphothreonine; by ROCK2 modification is found at Thr-480. Residue Ser-481 is modified to Phosphoserine; by PKA. Positions 576–601 (RREVERKQKGSEENLDETREQKEKSP) are enriched in basic and acidic residues. Ser-586, Ser-600, and Ser-605 each carry phosphoserine. Position 610 is a phosphothreonine (Thr-610). Ser-613 carries the phosphoserine modification. A Phosphothreonine modification is found at Thr-614. Residues 698–712 (GSPMDPGSDGSPGKS) show a composition bias toward low complexity. Phosphoserine is present on residues Ser-705, Ser-708, and Ser-712. A compositionally biased stretch (basic residues) spans 713 to 735 (PSKKKKKFRTPSFLKKSKKKSDS). Position 714 is a phosphoserine; by PKC (Ser-714). The tract at residues 715–732 (KKKKKFRTPSFLKKSKKK) is interaction with calmodulin. At Ser-724 the chain carries Phosphoserine; by PKA and PKC.

It belongs to the aldolase class II family. Adducin subfamily. Heterodimer of an alpha and a beta subunit or an alpha and a gamma subunit.

It is found in the cytoplasm. It localises to the cytoskeleton. The protein localises to the cell membrane. Functionally, membrane-cytoskeleton-associated protein that promotes the assembly of the spectrin-actin network. Binds to calmodulin. The protein is Alpha-adducin (Add1) of Mus musculus (Mouse).